The primary structure comprises 443 residues: UPF0597 protein Dvul_2496 (443 aa).

The tract at residues 156-178 (GMERAPEADGTLHGGASCEPSAS) is disordered.

It belongs to the UPF0597 family.

The sequence is that of UPF0597 protein Dvul_2496 from Nitratidesulfovibrio vulgaris (strain DP4) (Desulfovibrio vulgaris).